A 102-amino-acid polypeptide reads, in one-letter code: uncharacterized protein (102 aa).

2 helical membrane passes run Tyr-28–Ile-48 and Leu-81–Gly-101.

It localises to the membrane. This is an uncharacterized protein from Saccharomyces cerevisiae (strain ATCC 204508 / S288c) (Baker's yeast).